The chain runs to 340 residues: Delta-aminolevulinic acid dehydratase (340 aa).

C134, C136, and C144 together coordinate Zn(2+). The Schiff-base intermediate with substrate role is filled by K211. 5-aminolevulinate is bound by residues R221 and R233. Residue K264 is the Schiff-base intermediate with substrate of the active site. Residues S291 and Y330 each contribute to the 5-aminolevulinate site.

It belongs to the ALAD family. Homooctamer. The cofactor is Zn(2+).

It catalyses the reaction 2 5-aminolevulinate = porphobilinogen + 2 H2O + H(+). It participates in porphyrin-containing compound metabolism; protoporphyrin-IX biosynthesis; coproporphyrinogen-III from 5-aminolevulinate: step 1/4. Its function is as follows. Catalyzes an early step in the biosynthesis of tetrapyrroles. Binds two molecules of 5-aminolevulinate per subunit, each at a distinct site, and catalyzes their condensation to form porphobilinogen. In Eremothecium gossypii (strain ATCC 10895 / CBS 109.51 / FGSC 9923 / NRRL Y-1056) (Yeast), this protein is Delta-aminolevulinic acid dehydratase (HEM2).